Reading from the N-terminus, the 213-residue chain is 3-demethoxyubiquinol 3-hydroxylase (213 aa).

Positions 62, 92, 95, 144, 176, and 179 each coordinate Fe cation.

It belongs to the COQ7 family. The cofactor is Fe cation.

Its subcellular location is the cell membrane. The catalysed reaction is a 5-methoxy-2-methyl-3-(all-trans-polyprenyl)benzene-1,4-diol + AH2 + O2 = a 3-demethylubiquinol + A + H2O. Its pathway is cofactor biosynthesis; ubiquinone biosynthesis. In terms of biological role, catalyzes the hydroxylation of 2-nonaprenyl-3-methyl-6-methoxy-1,4-benzoquinol during ubiquinone biosynthesis. The sequence is that of 3-demethoxyubiquinol 3-hydroxylase from Psychrobacter sp. (strain PRwf-1).